We begin with the raw amino-acid sequence, 544 residues long: Methionine--tRNA ligase 1 (544 aa).

The 'HIGH' region signature appears at 10–20 (PYANGSLHLGH). Residues Cys-141, Cys-144, Cys-153, and Cys-156 each contribute to the Zn(2+) site. Positions 329–333 (KLSTS) match the 'KMSKS' region motif. Thr-332 contributes to the ATP binding site.

Belongs to the class-I aminoacyl-tRNA synthetase family. MetG type 1 subfamily. In terms of assembly, monomer. The cofactor is Zn(2+).

It localises to the cytoplasm. It carries out the reaction tRNA(Met) + L-methionine + ATP = L-methionyl-tRNA(Met) + AMP + diphosphate. In terms of biological role, is required not only for elongation of protein synthesis but also for the initiation of all mRNA translation through initiator tRNA(fMet) aminoacylation. The chain is Methionine--tRNA ligase 1 from Bacillus cereus (strain ATCC 10987 / NRS 248).